The chain runs to 202 residues: Large ribosomal subunit protein bL25 (202 aa).

It belongs to the bacterial ribosomal protein bL25 family. CTC subfamily. In terms of assembly, part of the 50S ribosomal subunit; part of the 5S rRNA/L5/L18/L25 subcomplex. Contacts the 5S rRNA. Binds to the 5S rRNA independently of L5 and L18.

Its function is as follows. This is one of the proteins that binds to the 5S RNA in the ribosome where it forms part of the central protuberance. The chain is Large ribosomal subunit protein bL25 from Methylococcus capsulatus (strain ATCC 33009 / NCIMB 11132 / Bath).